Reading from the N-terminus, the 369-residue chain is Glutamate 5-kinase (369 aa).

Residue Lys-9 participates in ATP binding. Ser-49, Asp-136, and Asn-148 together coordinate substrate. Residues 168-169 (TD) and 210-216 (TGGMLTK) contribute to the ATP site. The 81-residue stretch at 275-355 (QGSIWVDKGA…KGVLIYRDDW (81 aa)) folds into the PUA domain.

The protein belongs to the glutamate 5-kinase family.

The protein localises to the cytoplasm. It carries out the reaction L-glutamate + ATP = L-glutamyl 5-phosphate + ADP. The protein operates within amino-acid biosynthesis; L-proline biosynthesis; L-glutamate 5-semialdehyde from L-glutamate: step 1/2. Functionally, catalyzes the transfer of a phosphate group to glutamate to form L-glutamate 5-phosphate. The polypeptide is Glutamate 5-kinase (Streptococcus pneumoniae (strain 70585)).